The following is a 540-amino-acid chain: MADSSGSNPQSPGFTEKLKSWLCWSWTYICALWFAMVLTMVYVLRSPLKLQETVNAASVFLNTLTPKFYVALTGTSSLISGLILIFEWWYFRKYGTSFIEQVSVSHLRPLLGGVENSGSAGLFSSVNGDAEPRSNVAECKVWRNPLNLFRGAEYSRYTWVTGKEPLTYYDMNLSAQDHQTFFLGDTQQLRPEDSVMQKAWRERNPQARIRAAYQAIELNRECAAAYVLLAEEEATTITEAERLFKQALKSAGKDTNLVVYIKRRLAMCARKLGRIKEAVKMMRDLMKEFPLLGMLNIHENLLEALLELQAYADVQAVLAKYDDISLPKSATICYTSALLKARAVSDKFSPEAASRRGLSTAEMNAVEAIHRAVEFNPHVPKYLLEMKSLILPPEHILKRGDSEAVAYAFFHLQHWKRAEGALNLLHCTWEGTFRIIPYPLEKGHLFYPYPGCTETADRELLPSFHEVSVYPKKELPFFILFTAGLCSFCAMLAMLTHQFPELMGVFVKAFFSTLFAPLGFFADKMESFMPSCLWHQLTNV.

Helical transmembrane passes span 24-44 (WSWT…VYVL), 68-88 (FYVA…IFEW), 475-495 (LPFF…LAML), and 502-522 (LMGV…GFFA).

It belongs to the ST7 family.

Its subcellular location is the membrane. The protein is Suppressor of tumorigenicity 7 protein-like (st7l) of Danio rerio (Zebrafish).